The following is a 189-amino-acid chain: Large ribosomal subunit protein bL12c (189 aa).

Disordered stretches follow at residues 1 to 30 (MAAT…HPQP) and 165 to 189 (EGVS…VSIV). Residues 1 to 56 (MAATTTMATLNLPSLTSHPNSSTFPKHPQPLQFPFRTTTNPISLSSTRTTRLRPIA) constitute a chloroplast transit peptide. A compositionally biased stretch (polar residues) spans 11–24 (NLPSLTSHPNSSTF). A compositionally biased stretch (basic and acidic residues) spans 165-183 (EGVSKDDAEDAKKQLEDAG).

Component of the chloroplast large ribosomal subunit (LSU). Mature 70S chloroplast ribosomes of higher plants consist of a small (30S) and a large (50S) subunit. The 30S small subunit contains 1 molecule of ribosomal RNA (16S rRNA) and 24 different proteins. The 50S large subunit contains 3 rRNA molecules (23S, 5S and 4.5S rRNA) and 33 different proteins.

Its subcellular location is the plastid. The protein resides in the chloroplast. Its function is as follows. Component of the chloroplast ribosome (chloro-ribosome), a dedicated translation machinery responsible for the synthesis of chloroplast genome-encoded proteins, including proteins of the transcription and translation machinery and components of the photosynthetic apparatus. This Spinacia oleracea (Spinach) protein is Large ribosomal subunit protein bL12c (RPL12).